Consider the following 697-residue polypeptide: MSNQQIKEKIISLNNYLKHLNHLYYDLDAPEVDDKTYDSLYNELLELEAKYPSLVLEDSVTKIIGAFVSNKFKKTKHNKEMLSLDKAYKESEIFSFYENFTQYKNLENFGFSLEPKIDGLSISIHYDNGKFIKAITRGDGTTGEDVSENVFQIRDVPKQISYLKPLEVRGEIYMKKSTWKSLNEDIKNQYFQTNIEKIFSYMQALPKSKSWSNLKIKTPIFFKNARNAAAGTLRQKDPKIVKSRNLSSLFYEIVSPLEHNLKTQMEVLAFLKEQNFEVNEFQKLAKNDQEIMFEINEFSKIKNNFEFDCDGFVIKFNLIDKWEQIGFTSKFPKWAIAYKYMLEEANTKILNIVAQVGRTGNITYIAQFMPVELNNTTVQNATLHNYEFIKKNNINIGDEITIIKSGEIIPKVISIYKKNTDSVFEKVLNCPSCNSLLEIPEGYVDQFCRNENCDEKKIQMLTFFVSKNCLNITNLSVQNIRIFYNHPVIQMREIQDIFLLKNHVDEIKKIKFFAGKSQENKKINNILQSIEKAKDAYLRNVLAALGIKGIGNIAANLLTNKITKLSDLNNLTDEDLLSIDTFGEKSIENLKEFLSSEKNQDLIKFLDENLNYLNSKKSSKLNNLNFAITGSLSISRDEFKKIILDNGGIFSNSVSKNTSYLISNSKENSTKIKKALENNIKVITEEEFHNLLKEENA.

NAD(+) is bound by residues 34–38 (DKTYD), 83–84 (SL), and E114. K116 functions as the N6-AMP-lysine intermediate in the catalytic mechanism. NAD(+)-binding residues include R137, E171, K315, and K339. The Zn(2+) site is built by C430, C433, C448, and C453. The BRCT domain maps to 616–697 (KKSSKLNNLN…FHNLLKEENA (82 aa)).

The protein belongs to the NAD-dependent DNA ligase family. LigA subfamily. Mg(2+) serves as cofactor. Mn(2+) is required as a cofactor.

It catalyses the reaction NAD(+) + (deoxyribonucleotide)n-3'-hydroxyl + 5'-phospho-(deoxyribonucleotide)m = (deoxyribonucleotide)n+m + AMP + beta-nicotinamide D-nucleotide.. In terms of biological role, DNA ligase that catalyzes the formation of phosphodiester linkages between 5'-phosphoryl and 3'-hydroxyl groups in double-stranded DNA using NAD as a coenzyme and as the energy source for the reaction. It is essential for DNA replication and repair of damaged DNA. The protein is DNA ligase of Mycoplasmopsis synoviae (strain 53) (Mycoplasma synoviae).